The sequence spans 325 residues: L-lactate dehydrogenase (325 aa).

Residues valine 19, aspartate 40, lysine 45, tyrosine 70, and 84-85 (GA) contribute to the NAD(+) site. Substrate-binding residues include glutamine 87 and arginine 93. NAD(+)-binding positions include threonine 106, 123–125 (AAN), and serine 148. 125-128 (NPVD) is a substrate binding site. Position 153-156 (153-156 (DSAR)) interacts with substrate. Residues arginine 158 and histidine 173 each coordinate beta-D-fructose 1,6-bisphosphate. Catalysis depends on histidine 180, which acts as the Proton acceptor. Position 225 is a phosphotyrosine (tyrosine 225). Substrate is bound at residue threonine 234.

It belongs to the LDH/MDH superfamily. LDH family. As to quaternary structure, homotetramer.

The protein resides in the cytoplasm. The enzyme catalyses (S)-lactate + NAD(+) = pyruvate + NADH + H(+). The protein operates within fermentation; pyruvate fermentation to lactate; (S)-lactate from pyruvate: step 1/1. With respect to regulation, allosterically activated by fructose 1,6-bisphosphate (FBP). In terms of biological role, catalyzes the conversion of lactate to pyruvate. The chain is L-lactate dehydrogenase from Latilactobacillus sakei (Lactobacillus sakei).